We begin with the raw amino-acid sequence, 938 residues long: Protein SEY1 (938 aa).

The tract at residues 1–159 is disordered; sequence MTSQSHGAPP…QKSAKSTPGS (159 aa). At 1 to 839 the chain is on the cytoplasmic side; sequence MTSQSHGAPP…KRSTIQSTTQ (839 aa). Positions 33 to 45 are enriched in low complexity; it reads SVSSSHSSHSPVT. The segment covering 74–94 has biased composition (pro residues); that stretch reads IAAPEPIAAPEPIPAPEPIAA. Residues 100–118 show a composition bias toward basic and acidic residues; it reads LKSEHKPVEREHKPVERKP. The segment covering 146-158 has biased composition (polar residues); that stretch reads VPTSQKSAKSTPG. The GB1/RHD3-type G domain maps to 192 to 423; sequence GLDYHVVAVF…DPNYVFKPVY (232 aa). A GTP-binding site is contributed by 202 to 209; the sequence is GSQSTGKS. A coiled-coil region spans residues 603 to 630; that stretch reads SYDDTLAALEQELDTLRDHKSKVEIDRL. A helical membrane pass occupies residues 840–860; that stretch reads IPLYMYGLLLLLGWNEIMAVL. Residues 861-863 are Lumenal-facing; the sequence is RSP. Residues 864-884 traverse the membrane as a helical segment; sequence VYFMFLLVAAGAAYVIHTLHL. The Cytoplasmic portion of the chain corresponds to 885–938; the sequence is WGPLTHMTNTMIAEATDMAKAKLKQVLNEAPTGETREREAPVGSSRDDVELKDL. The disordered stretch occupies residues 911–938; that stretch reads LNEAPTGETREREAPVGSSRDDVELKDL. The span at 918-938 shows a compositional bias: basic and acidic residues; that stretch reads ETREREAPVGSSRDDVELKDL.

Belongs to the TRAFAC class dynamin-like GTPase superfamily. GB1/RHD3 GTPase family. RHD3 subfamily.

Its subcellular location is the endoplasmic reticulum membrane. Its function is as follows. Cooperates with the reticulon proteins and tubule-shaping DP1 family proteins to generate and maintain the structure of the tubular endoplasmic reticulum network. Has GTPase activity, which is required for its function in ER organization. The polypeptide is Protein SEY1 (Yarrowia lipolytica (strain CLIB 122 / E 150) (Yeast)).